The sequence spans 201 residues: MAASLSELSTYLGERLIGRVNDADIAYGELTMHVEPRNLIEVVTFLRDDQRCQFISIIDVCGADYPSRPKRFDVVYHLLSPKQNVRIRLKVQADEETMVPSITGVFPGADWFERETYDLYGVLFSGHPDLRRLLTDYGFEGHPLRKDFPLTGFVEVRYDDEAKRVIYEPVELKQEFRNFDFLSPWEGTDYVLPGDEKAKTN.

Belongs to the complex I 30 kDa subunit family. As to quaternary structure, NDH-1 is composed of 14 different subunits. Subunits NuoB, C, D, E, F, and G constitute the peripheral sector of the complex.

The protein resides in the cell inner membrane. The enzyme catalyses a quinone + NADH + 5 H(+)(in) = a quinol + NAD(+) + 4 H(+)(out). In terms of biological role, NDH-1 shuttles electrons from NADH, via FMN and iron-sulfur (Fe-S) centers, to quinones in the respiratory chain. The immediate electron acceptor for the enzyme in this species is believed to be ubiquinone. Couples the redox reaction to proton translocation (for every two electrons transferred, four hydrogen ions are translocated across the cytoplasmic membrane), and thus conserves the redox energy in a proton gradient. The sequence is that of NADH-quinone oxidoreductase subunit C from Mesorhizobium japonicum (strain LMG 29417 / CECT 9101 / MAFF 303099) (Mesorhizobium loti (strain MAFF 303099)).